A 121-amino-acid polypeptide reads, in one-letter code: Non-structural protein 3a (121 aa).

An N-terminal signal peptide occupies residues 1–39; that stretch reads MMSMRSRRSMFIEHFNELMMRVQRPPTLLLILLVANAFS.

The protein is Non-structural protein 3a of Bat coronavirus HKU5 (BtCoV).